Consider the following 419-residue polypeptide: Tyrosine--tRNA ligase 2 (419 aa).

Tyrosine 34 contributes to the L-tyrosine binding site. The short motif at 39–48 (PTGDSMHIGH) is the 'HIGH' region element. The L-tyrosine site is built by tyrosine 168 and glutamine 172. The 'KMSKS' region motif lies at 230–234 (KFGKS). Lysine 233 serves as a coordination point for ATP. One can recognise an S4 RNA-binding domain in the interval 352–418 (KNIVEWLVDL…GKKNYSLVKL (67 aa)).

This sequence belongs to the class-I aminoacyl-tRNA synthetase family. TyrS type 1 subfamily. As to quaternary structure, homodimer.

It localises to the cytoplasm. It carries out the reaction tRNA(Tyr) + L-tyrosine + ATP = L-tyrosyl-tRNA(Tyr) + AMP + diphosphate + H(+). In terms of biological role, catalyzes the attachment of tyrosine to tRNA(Tyr) in a two-step reaction: tyrosine is first activated by ATP to form Tyr-AMP and then transferred to the acceptor end of tRNA(Tyr). The protein is Tyrosine--tRNA ligase 2 of Bacillus cereus (strain ZK / E33L).